The chain runs to 343 residues: 3-dehydroquinate synthase (343 aa).

NAD(+) contacts are provided by residues 61 to 66, 95 to 99, 119 to 120, K132, K141, and 159 to 162; these read SGEKYK, GVISD, TT, and FLKT. Zn(2+) is bound by residues E174, H231, and H248.

The protein belongs to the sugar phosphate cyclases superfamily. Dehydroquinate synthase family. NAD(+) is required as a cofactor. The cofactor is Co(2+). Requires Zn(2+) as cofactor.

It is found in the cytoplasm. It catalyses the reaction 7-phospho-2-dehydro-3-deoxy-D-arabino-heptonate = 3-dehydroquinate + phosphate. It participates in metabolic intermediate biosynthesis; chorismate biosynthesis; chorismate from D-erythrose 4-phosphate and phosphoenolpyruvate: step 2/7. In terms of biological role, catalyzes the conversion of 3-deoxy-D-arabino-heptulosonate 7-phosphate (DAHP) to dehydroquinate (DHQ). This chain is 3-dehydroquinate synthase, found in Helicobacter pylori (strain J99 / ATCC 700824) (Campylobacter pylori J99).